The primary structure comprises 350 residues: Geranylgeranyl pyrophosphate synthase (350 aa).

Isopentenyl diphosphate contacts are provided by K66, R69, and H98. Residues D105 and D109 each contribute to the Mg(2+) site. R114 is a binding site for dimethylallyl diphosphate. R115 contributes to the isopentenyl diphosphate binding site. Dimethylallyl diphosphate is bound by residues K200, T201, Q236, N243, and K263.

This sequence belongs to the FPP/GGPP synthase family. Mg(2+) is required as a cofactor.

It catalyses the reaction isopentenyl diphosphate + dimethylallyl diphosphate = (2E)-geranyl diphosphate + diphosphate. It carries out the reaction isopentenyl diphosphate + (2E)-geranyl diphosphate = (2E,6E)-farnesyl diphosphate + diphosphate. The enzyme catalyses isopentenyl diphosphate + (2E,6E)-farnesyl diphosphate = (2E,6E,10E)-geranylgeranyl diphosphate + diphosphate. Its pathway is secondary metabolite biosynthesis; terpenoid biosynthesis. In terms of biological role, geranylgeranyl pyrophosphate synthase; part of the gene cluster that mediates the biosynthesis of pleuromutilin, a tricyclic diterpene showing antibacterial properties. The geranylgeranyl diphosphate (GGPP) synthase catalyzes the first step in pleuromutilin biosynthesis. GGPP is then substrate of the premutilin synthase (PS) to yield premutilin. Premutilin synthase is a bifunctional enzyme composed of the fusion of a class II diterpene cyclase (DTC) and a class I diterpene synthase (DTS), with the corresponding domains and active sites containing characteristic aspartate-rich motifs. GGPP is first converted to mutildienyl-diphosphate (MPP) at the class II DTC site. MPP is subsequently further cyclized at the class I DTS site, followed by a 1,5-hydride shift and addition of water prior to terminating deprotonation, to yield premutilin. In addition to the aforementioned GGPP synthase and bifunctional diterpene synthase, the cluster also contains three cytochrome P450 monooxygenases, a short-chain alcohol dehydrogenase, and an acyltransferase, involved in the conversion of premutilin to pleuromutilin. The cytochrome P450 monooxygenases P450-1 and P450-2 hydroxylate premutilin at C-11 and C-3, respectively, producing 11-hydroxypremutilin and 3-hydroxypremutilin. The combination of the actions of both ple5 and ple6 leads to the production of 3,11-dihydroxypremutilin. The short chain dehydrogenase SDR further converts 3,11-dihydroxypremutilin into mutilin. The acetyltransferase ATF then acetylates mutilin to produce 14-O-acetylmutilin. Finally, the cytochrome P450 monooxygenase P450-3 catalyzes hydroxylation on the alpha position of the acetyl side chain of 14-O-acetylmutilin to yield pleuromutilin. The sequence is that of Geranylgeranyl pyrophosphate synthase from Clitopilus passeckerianus (Pleurotus passeckerianus).